A 204-amino-acid polypeptide reads, in one-letter code: Potassium-transporting ATPase KdpC subunit (204 aa).

Residues 21 to 41 form a helical membrane-spanning segment; that stretch reads AALVIFVGLSLVTGVLYPVVV.

This sequence belongs to the KdpC family. In terms of assembly, the system is composed of three essential subunits: KdpA, KdpB and KdpC.

It is found in the cell inner membrane. Part of the high-affinity ATP-driven potassium transport (or Kdp) system, which catalyzes the hydrolysis of ATP coupled with the electrogenic transport of potassium into the cytoplasm. This subunit acts as a catalytic chaperone that increases the ATP-binding affinity of the ATP-hydrolyzing subunit KdpB by the formation of a transient KdpB/KdpC/ATP ternary complex. This chain is Potassium-transporting ATPase KdpC subunit, found in Ralstonia nicotianae (strain ATCC BAA-1114 / GMI1000) (Ralstonia solanacearum).